Here is a 519-residue protein sequence, read N- to C-terminus: Berghepain-1 (519 aa).

Residues 1-32 (MINDIRRINITTSSIESLNENSKYLKRNHKRT) lie on the Cytoplasmic side of the membrane. Residues 33–53 (IKICAYAITTFALFFIVVVYF) traverse the membrane as a helical; Signal-anchor for type II membrane protein segment. Residues 54–519 (KNQTNVNDAN…IGIDVFFPIL (466 aa)) lie on the Lumenal side of the membrane. N-linked (GlcNAc...) asparagine glycans are attached at residues Asn-55 and Asn-143. Cystine bridges form between Cys-298–Cys-340, Cys-333–Cys-373, Cys-358–Cys-378, and Cys-427–Cys-508. The active site involves Cys-301. Asn-432 is a glycosylation site (N-linked (GlcNAc...) asparagine). Residues His-433 and Asn-483 contribute to the active site.

This sequence belongs to the peptidase C1 family.

It is found in the membrane. In terms of biological role, cysteine protease. Required for host hepatocyte-derived merozoite infectivity and to a lesser extent for host erythrocyte-derived merozoite infectivity. The protein is Berghepain-1 of Plasmodium berghei (strain Anka).